The sequence spans 277 residues: MDKILSGKTVAIDIKGQIKSYTEELKASGKSLKISSILVGDDGGSVYYQNFQEKLANNLGIDFEKIKLDESISEENLKLKIEELNKDDSVNGIMLLLPLPKHIDERAVTNLIDADKDLDCLSEVSVGRFYKGEKCFMPCTPNSVITLLKAYNIEIEGKEVVIIGRSNIVGKPLFQMFLNENATVTVCHSRTKNLKEVCKRADILVVAIGRANFIDSSYVREGAVVIDVGTSEVNGKITGDVNFDDVYDKASLITPVPGGVGSLTTTLLLKNVCKELD.

NADP(+) is bound by residues 164–166 (GRS), Ser189, and Thr230.

This sequence belongs to the tetrahydrofolate dehydrogenase/cyclohydrolase family. As to quaternary structure, homodimer.

The catalysed reaction is (6R)-5,10-methylene-5,6,7,8-tetrahydrofolate + NADP(+) = (6R)-5,10-methenyltetrahydrofolate + NADPH. The enzyme catalyses (6R)-5,10-methenyltetrahydrofolate + H2O = (6R)-10-formyltetrahydrofolate + H(+). It functions in the pathway one-carbon metabolism; tetrahydrofolate interconversion. In terms of biological role, catalyzes the oxidation of 5,10-methylenetetrahydrofolate to 5,10-methenyltetrahydrofolate and then the hydrolysis of 5,10-methenyltetrahydrofolate to 10-formyltetrahydrofolate. This chain is Bifunctional protein FolD, found in Clostridium perfringens (strain 13 / Type A).